Consider the following 327-residue polypeptide: Phosphate acyltransferase (327 aa).

It belongs to the PlsX family. Homodimer. Probably interacts with PlsY.

It is found in the cytoplasm. It carries out the reaction a fatty acyl-[ACP] + phosphate = an acyl phosphate + holo-[ACP]. The protein operates within lipid metabolism; phospholipid metabolism. Catalyzes the reversible formation of acyl-phosphate (acyl-PO(4)) from acyl-[acyl-carrier-protein] (acyl-ACP). This enzyme utilizes acyl-ACP as fatty acyl donor, but not acyl-CoA. This is Phosphate acyltransferase from Thermosipho africanus (strain TCF52B).